Reading from the N-terminus, the 149-residue chain is Transcriptional repressor NrdR (149 aa).

Residues 3 to 34 fold into a zinc finger; it reads CPFCSAVDTKVIDSRLVGEGSSVRRRRQCLVC. An ATP-cone domain is found at 49–139; sequence PRVVKSNDVR…VYRSFEDIKE (91 aa).

It belongs to the NrdR family. The cofactor is Zn(2+).

In terms of biological role, negatively regulates transcription of bacterial ribonucleotide reductase nrd genes and operons by binding to NrdR-boxes. This is Transcriptional repressor NrdR from Enterobacter sp. (strain 638).